Consider the following 261-residue polypeptide: Small ribosomal subunit protein uS2 (261 aa).

Ser-2 is subject to N-acetylserine. The disordered stretch occupies residues 214 to 261 (ATEDIKTDDVEEAPAADAETEWTGETEEVDWAESGATPAAEEAAASNW). A compositionally biased stretch (acidic residues) spans 222-244 (DVEEAPAADAETEWTGETEEVDW). Low complexity predominate over residues 245–261 (AESGATPAAEEAAASNW).

This sequence belongs to the universal ribosomal protein uS2 family. Component of the small ribosomal subunit. Mature ribosomes consist of a small (40S) and a large (60S) subunit. The 40S subunit contains about 33 different proteins and 1 molecule of RNA (18S). The 60S subunit contains about 49 different proteins and 3 molecules of RNA (25S, 5.8S and 5S). Interacts with RPS21.

Its subcellular location is the cytoplasm. Functionally, required for the assembly and/or stability of the 40S ribosomal subunit. Required for the processing of the 20S rRNA-precursor to mature 18S rRNA in a late step of the maturation of 40S ribosomal subunits. In Debaryomyces hansenii (strain ATCC 36239 / CBS 767 / BCRC 21394 / JCM 1990 / NBRC 0083 / IGC 2968) (Yeast), this protein is Small ribosomal subunit protein uS2.